We begin with the raw amino-acid sequence, 423 residues long: Gamma-glutamyl phosphate reductase (423 aa).

It belongs to the gamma-glutamyl phosphate reductase family.

Its subcellular location is the cytoplasm. The enzyme catalyses L-glutamate 5-semialdehyde + phosphate + NADP(+) = L-glutamyl 5-phosphate + NADPH + H(+). It participates in amino-acid biosynthesis; L-proline biosynthesis; L-glutamate 5-semialdehyde from L-glutamate: step 2/2. Its function is as follows. Catalyzes the NADPH-dependent reduction of L-glutamate 5-phosphate into L-glutamate 5-semialdehyde and phosphate. The product spontaneously undergoes cyclization to form 1-pyrroline-5-carboxylate. In Pseudomonas putida (strain W619), this protein is Gamma-glutamyl phosphate reductase.